A 1026-amino-acid chain; its full sequence is MKFFALFIHRPVATLLLTLAIALCGVLGFRLLPVSPLPQVDFPVISVSASLAGASPETMASAVATPLERALGRIAGVSEMTSTSSLGSTRVILVFNLDRDINGAARDVQAAINAAQNLLPSGMSSRPTYRKVNPSDAPVMILTLTSDTYSQGQLYDFASTQLSQKISQMEGVGDVSIGGSSLPAVRVALNPVALFNQGISLDEVRQAIAQANVRQPLGNVENSQKRWQIQTNDELKTADAYAPLIIHYSNGAAVRLSDVATVEDSVQNSRNAGMANSKPAILVMIRRAPDANIITTVDNIRAAMPELRASLPAEIQLDVAQDRSPTIRASLAEVEQSLIIAVALVILVVFLFLRSWRATAIPALAVPVSLIGTFAAMYLCGFSLNNLSLMALTIATGFVVDDAIVVLENISRHIEAGMKPLQASLQGVREVGFTVLSMSLSLVAVFLPLLLMDGLPGRLFREFAVTLSVAIMISLLISLTLTPMLCARLLRAVPKRSQPRTQGFNRVLLAMQQGYGRSLKWVLNHARWVLLLLLGTIALNVWLYISIPKTFFPEQDTGRMMGFIQADQSISFQAMTVKLQNFMTIVSSDPAVDNVNGFTGGSRTNSGSMFISLKPLSERDVSAQQVISRLRIKLAKEPGANLFLMPVQDIRIGGREANAGYQYTLLSDDLNELRTWEPKIRAAFSKLPELADVNSDQQDKGAEMALTYDRDAMAQLGISVSAANALLNNAFGQRQISTIYQPLNQYKVVMEVDDAYTQDVSSLDKMFVINSDNKPIPLSYFASWKPINAPLSVNHQGLSAASTISFNLPEGTDLSSATAAIERTMTSLGVPSSVRGQFSGTAQAFQQSQSSQLLLILAAIITVYIVLGILYESYVHPLTILSTLPSAGVGALLALEWFGAPFSLVALIGIMLLIGIVKKNAIMMVDFALVAQRSGKLSAQDAIFQACLLRFRPIMMTTLAALFGALPLVLTSGDGAELRQPLGITIVGGLLMSQVLTLYTTPVVYLFFDKLRTIRRKAPEKDLSLS.

10 helical membrane-spanning segments follow: residues 12–34 (VATL…LLPV), 336–353 (QSLI…FLFL), 360–382 (AIPA…LCGF), 431–450 (VGFT…LPLL), 463–485 (FAVT…TPML), 525–547 (HARW…YISI), 853–875 (LLLI…ESYV), 895–917 (LEWF…IGIV), 948–970 (LLRF…PLVL), and 985–1007 (TIVG…VYLF).

It belongs to the resistance-nodulation-cell division (RND) (TC 2.A.6) family. MdtC subfamily. As to quaternary structure, part of a tripartite efflux system composed of MdtA, MdtB and MdtC. MdtC forms a heteromultimer with MdtB.

It is found in the cell inner membrane. The polypeptide is Multidrug resistance protein MdtC (Pectobacterium atrosepticum (strain SCRI 1043 / ATCC BAA-672) (Erwinia carotovora subsp. atroseptica)).